A 139-amino-acid polypeptide reads, in one-letter code: Small ribosomal subunit protein uS12 (139 aa).

The tract at residues 1–21 is disordered; that stretch reads MPTINQLVRKGRKAVQEKSTA. Asp-102 carries the 3-methylthioaspartic acid modification.

It belongs to the universal ribosomal protein uS12 family. As to quaternary structure, part of the 30S ribosomal subunit. Contacts proteins S8 and S17. May interact with IF1 in the 30S initiation complex.

Its function is as follows. With S4 and S5 plays an important role in translational accuracy. Interacts with and stabilizes bases of the 16S rRNA that are involved in tRNA selection in the A site and with the mRNA backbone. Located at the interface of the 30S and 50S subunits, it traverses the body of the 30S subunit contacting proteins on the other side and probably holding the rRNA structure together. The combined cluster of proteins S8, S12 and S17 appears to hold together the shoulder and platform of the 30S subunit. This chain is Small ribosomal subunit protein uS12, found in Alkaliphilus metalliredigens (strain QYMF).